The chain runs to 180 residues: Bifunctional protein PyrR 1 (180 aa).

Substrate contacts are provided by residues 39–40 (TR), 103–111 (DDVLFTGRT), R136, and V160. The short motif at 99-111 (VILVDDVLFTGRT) is the PRPP-binding element.

It belongs to the purine/pyrimidine phosphoribosyltransferase family. PyrR subfamily. In terms of assembly, homodimer and homohexamer; in equilibrium.

It catalyses the reaction UMP + diphosphate = 5-phospho-alpha-D-ribose 1-diphosphate + uracil. Regulates transcriptional attenuation of the pyrimidine nucleotide (pyr) operon by binding in a uridine-dependent manner to specific sites on pyr mRNA. This disrupts an antiterminator hairpin in the RNA and favors formation of a downstream transcription terminator, leading to a reduced expression of downstream genes. Functionally, also displays a weak uracil phosphoribosyltransferase activity which is not physiologically significant. The chain is Bifunctional protein PyrR 1 (pyrR1) from Lactiplantibacillus plantarum (strain ATCC BAA-793 / NCIMB 8826 / WCFS1) (Lactobacillus plantarum).